The following is a 1666-amino-acid chain: Atrochrysone carboxylic acid synthase PKS4 (1666 aa).

One can recognise a Ketosynthase family 3 (KS3) domain in the interval 15 to 452 (FEPIAIVGIG…GNAGFMVIEE (438 aa)). Catalysis depends on for beta-ketoacyl synthase activity residues Cys194, His332, and His372. The interval 555–863 (AFCFSGQGGE…WMTALDALMR (309 aa)) is malonyl-CoA:ACP transacylase (MAT) domain. Ser632 acts as the For acyl/malonyl transferase activity in catalysis. Positions 905–1034 (REVKASSTML…EQDLLESLSL (130 aa)) are N-terminal hotdog fold. Positions 905–1206 (REVKASSTML…MAKMKIYVLK (302 aa)) constitute a PKS/mFAS DH domain. The tract at residues 935–1203 (LLNHVMAGYT…DVRMAKMKIY (269 aa)) is product template (PT) domain. Residues 1050–1206 (STDVLRKELA…MAKMKIYVLK (157 aa)) form a C-terminal hotdog fold region. At Ser1269 the chain carries O-(pantetheine 4'-phosphoryl)serine. A Carrier domain is found at 1331–1395 (ATSPSLPIMP…TSTEPSQTLV (65 aa)). The tract at residues 1334–1397 (PSLPIMPNGV…TEPSQTLVAN (64 aa)) is proline-rich linker region. The tract at residues 1444 to 1529 (TVIGIHCPGL…PPGVVGLTAQ (86 aa)) is alpha/beta hydrolase superfamily-type thioesterase (TE) domain.

It carries out the reaction holo-[ACP] + 8 malonyl-CoA + 8 H(+) = atrochrysone carboxyl-[ACP] + 8 CO2 + 8 CoA + 2 H2O. It functions in the pathway secondary metabolite biosynthesis. Functionally, non-reducing polyketide synthase that synthesizes the universal anthraquinone precursor atrochrysone carboxylic acid from malonyl-CoA. Produces a mixture of both 3R and 3S enantiomers with an excess of the 3S form. PKS4 catalyzes both hepta- and octaketide synthesis and also yields 6-hydroxymusizin, probably via carboxylating activity inherent to the KS domain. The sequence is that of Atrochrysone carboxylic acid synthase PKS4 from Calonarius odorifer (Mushroom).